We begin with the raw amino-acid sequence, 180 residues long: Pro-glucagon (180 aa).

Positions 1–20 (MKTIYFVAGLLIMLVQGSWQ) are cleaved as a signal peptide. Positions 25–58 (DTEENPRSFPASQTEAHEDPDEMNEDKRHSQGTF) are disordered. Phosphoserine is present on Ser-54. A propeptide spanning residues 84-89 (NRNNIA) is cleaved from the precursor. Ser-105 and Ser-108 each carry phosphoserine. Position 127 is an arginine amide (Arg-127). A propeptide spanning residues 131 to 145 (DFPEEVAIAEELGRR) is cleaved from the precursor. Residues Ser-150 and Ser-152 each carry the phosphoserine modification.

The protein belongs to the glucagon family. Post-translationally, proglucagon is post-translationally processed in a tissue-specific manner in pancreatic A cells and intestinal L cells. In pancreatic A cells, the major bioactive hormone is glucagon cleaved by PCSK2/PC2. In the intestinal L cells PCSK1/PC1 liberates GLP-1, GLP-2, glicentin and oxyntomodulin. GLP-1 is further N-terminally truncated by post-translational processing in the intestinal L cells resulting in GLP-1(7-37) GLP-1-(7-36)amide. The C-terminal amidation is neither important for the metabolism of GLP-1 nor for its effects on the endocrine pancreas. In terms of tissue distribution, secreted in the A cells of the islets of Langerhans. Secreted in the A cells of the islets of Langerhans. Secreted from enteroendocrine L cells throughout the gastrointestinal tract. Also secreted in selected neurons in the brain. As to expression, secreted from enteroendocrine cells throughout the gastrointestinal tract. Also secreted in selected neurons in the brain. In terms of tissue distribution, secreted from enteroendocrine cells throughout the gastrointestinal tract.

Its subcellular location is the secreted. In terms of biological role, plays a key role in glucose metabolism and homeostasis. Regulates blood glucose by increasing gluconeogenesis and decreasing glycolysis. A counterregulatory hormone of insulin, raises plasma glucose levels in response to insulin-induced hypoglycemia. Plays an important role in initiating and maintaining hyperglycemic conditions in diabetes. Potent stimulator of glucose-dependent insulin release. Also stimulates insulin release in response to IL6. Plays important roles on gastric motility and the suppression of plasma glucagon levels. May be involved in the suppression of satiety and stimulation of glucose disposal in peripheral tissues, independent of the actions of insulin. Has growth-promoting activities on intestinal epithelium. May also regulate the hypothalamic pituitary axis (HPA) via effects on LH, TSH, CRH, oxytocin, and vasopressin secretion. Increases islet mass through stimulation of islet neogenesis and pancreatic beta cell proliferation. Inhibits beta cell apoptosis. Its function is as follows. Stimulates intestinal growth and up-regulates villus height in the small intestine, concomitant with increased crypt cell proliferation and decreased enterocyte apoptosis. The gastrointestinal tract, from the stomach to the colon is the principal target for GLP-2 action. Plays a key role in nutrient homeostasis, enhancing nutrient assimilation through enhanced gastrointestinal function, as well as increasing nutrient disposal. Stimulates intestinal glucose transport and decreases mucosal permeability. Functionally, significantly reduces food intake. Inhibits gastric emptying in humans. Suppression of gastric emptying may lead to increased gastric distension, which may contribute to satiety by causing a sensation of fullness. In terms of biological role, may modulate gastric acid secretion and the gastro-pyloro-duodenal activity. May play an important role in intestinal mucosal growth in the early period of life. This is Pro-glucagon (Gcg) from Mus musculus (Mouse).